A 425-amino-acid chain; its full sequence is Serine--tRNA ligase (425 aa).

231 to 233 lines the L-serine pocket; it reads TAE. 262–264 serves as a coordination point for ATP; the sequence is RSE. L-serine is bound at residue E285. ATP is bound at residue 349-352; the sequence is EISS. S385 contacts L-serine.

Belongs to the class-II aminoacyl-tRNA synthetase family. Type-1 seryl-tRNA synthetase subfamily. In terms of assembly, homodimer. The tRNA molecule binds across the dimer.

It localises to the cytoplasm. The catalysed reaction is tRNA(Ser) + L-serine + ATP = L-seryl-tRNA(Ser) + AMP + diphosphate + H(+). It carries out the reaction tRNA(Sec) + L-serine + ATP = L-seryl-tRNA(Sec) + AMP + diphosphate + H(+). The protein operates within aminoacyl-tRNA biosynthesis; selenocysteinyl-tRNA(Sec) biosynthesis; L-seryl-tRNA(Sec) from L-serine and tRNA(Sec): step 1/1. Its function is as follows. Catalyzes the attachment of serine to tRNA(Ser). Is also able to aminoacylate tRNA(Sec) with serine, to form the misacylated tRNA L-seryl-tRNA(Sec), which will be further converted into selenocysteinyl-tRNA(Sec). This is Serine--tRNA ligase from Desulfosudis oleivorans (strain DSM 6200 / JCM 39069 / Hxd3) (Desulfococcus oleovorans).